Here is a 125-residue protein sequence, read N- to C-terminus: Large ribosomal subunit protein bL12 (125 aa).

This sequence belongs to the bacterial ribosomal protein bL12 family. In terms of assembly, homodimer. Part of the ribosomal stalk of the 50S ribosomal subunit. Forms a multimeric L10(L12)X complex, where L10 forms an elongated spine to which 2 to 4 L12 dimers bind in a sequential fashion. Binds GTP-bound translation factors.

Functionally, forms part of the ribosomal stalk which helps the ribosome interact with GTP-bound translation factors. Is thus essential for accurate translation. This Ruthia magnifica subsp. Calyptogena magnifica protein is Large ribosomal subunit protein bL12.